A 358-amino-acid chain; its full sequence is Probable branched-chain-amino-acid aminotransferase (358 aa).

The residue at position 196 (Lys-196) is an N6-(pyridoxal phosphate)lysine.

This sequence belongs to the class-IV pyridoxal-phosphate-dependent aminotransferase family. The cofactor is pyridoxal 5'-phosphate.

It carries out the reaction L-leucine + 2-oxoglutarate = 4-methyl-2-oxopentanoate + L-glutamate. It catalyses the reaction L-isoleucine + 2-oxoglutarate = (S)-3-methyl-2-oxopentanoate + L-glutamate. The enzyme catalyses L-valine + 2-oxoglutarate = 3-methyl-2-oxobutanoate + L-glutamate. The protein operates within amino-acid biosynthesis; L-isoleucine biosynthesis; L-isoleucine from 2-oxobutanoate: step 4/4. It participates in amino-acid biosynthesis; L-leucine biosynthesis; L-leucine from 3-methyl-2-oxobutanoate: step 4/4. Its pathway is amino-acid biosynthesis; L-valine biosynthesis; L-valine from pyruvate: step 4/4. Functionally, acts on leucine, isoleucine and valine. The polypeptide is Probable branched-chain-amino-acid aminotransferase (ilvE) (Staphylococcus epidermidis (strain ATCC 12228 / FDA PCI 1200)).